We begin with the raw amino-acid sequence, 209 residues long: MSNVDINHARALVYQLLSSLFAREIDEQRLKQLTSEQAQQFWTQLGYAPEFSAPVASIQKVLNDLTSDEALLELAADYCGLFLVGTKYSASPYASLYLSPEEEPLLFGQQHQQMSEFLHQSKLQVQSHFPEPADHLAVILAYMGHLACHSEDAAQLSFLNTCIDSWLAKFVAKVIECDSQHSNGFYSALATLTLAWVQQDKQQLEQAIH.

The protein belongs to the TorD/DmsD family. TorD subfamily.

It localises to the cytoplasm. Functionally, involved in the biogenesis of TorA. Acts on TorA before the insertion of the molybdenum cofactor and, as a result, probably favors a conformation of the apoenzyme that is competent for acquiring the cofactor. The protein is Chaperone protein TorD of Shewanella sp. (strain MR-4).